The following is a 469-amino-acid chain: Soluble pyridine nucleotide transhydrogenase (469 aa).

39-48 (ERENSVGGGC) is a binding site for FAD.

It belongs to the class-I pyridine nucleotide-disulfide oxidoreductase family. Requires FAD as cofactor.

It localises to the cytoplasm. It carries out the reaction NAD(+) + NADPH = NADH + NADP(+). Conversion of NADPH, generated by peripheral catabolic pathways, to NADH, which can enter the respiratory chain for energy generation. The protein is Soluble pyridine nucleotide transhydrogenase of Photobacterium profundum (strain SS9).